We begin with the raw amino-acid sequence, 255 residues long: tRNA pseudouridine synthase A (255 aa).

The active-site Nucleophile is the Asp56. Tyr114 provides a ligand contact to substrate.

This sequence belongs to the tRNA pseudouridine synthase TruA family. As to quaternary structure, homodimer.

The catalysed reaction is uridine(38/39/40) in tRNA = pseudouridine(38/39/40) in tRNA. Functionally, formation of pseudouridine at positions 38, 39 and 40 in the anticodon stem and loop of transfer RNAs. In Methylacidiphilum infernorum (isolate V4) (Methylokorus infernorum (strain V4)), this protein is tRNA pseudouridine synthase A.